Consider the following 166-residue polypeptide: Early E3 18.5 kDa glycoprotein (166 aa).

Positions 1-19 are cleaved as a signal peptide; it reads MGPILVLLVLLSLLEPGSA. Residues 20 to 131 are Lumenal-facing; that stretch reads NYDPCLDFDP…SKDNIVTFSI (112 aa). Residue Asn31 is glycosylated (N-linked (GlcNAc...) asparagine; by host). 2 disulfide bridges follow: Cys32–Cys50 and Cys44–Cys106. N-linked (GlcNAc...) asparagine; by host glycosylation is found at Asn63, Asn67, and Asn97. The chain crosses the membrane as a helical span at residues 132–152; the sequence is AYCLCACLLTALLCVCIHLLV. At 153-166 the chain is on the cytoplasmic side; sequence TTRIKNANNKEKMP. The short motif at 162–166 is the Di-lysine motif element; that stretch reads KEKMP.

This sequence belongs to the adenoviridae E19 family. Post-translationally, both disulfide bonds are absolutely critical for the interaction with MHC antigens. N-glycosylated; high-mannose.

It is found in the host endoplasmic reticulum membrane. In terms of biological role, binds and retains class I heavy chains in the endoplasmic reticulum during the early period of virus infection, thereby impairing their transport to the cell surface. Also delays the expression of class I alleles that it cannot affect by direct retention. Binds transporters associated with antigen processing (TAP) and acts as a tapasin inhibitor, preventing class I/TAP association. In consequence, infected cells are masked for immune recognition by cytotoxic T-lymphocytes. The chain is Early E3 18.5 kDa glycoprotein from Human adenovirus B serotype 11 (strain Slobiski) (HAdV-11).